Reading from the N-terminus, the 337-residue chain is tRNA N(3)-cytidine methyltransferase METTL2 (337 aa).

Residues W66, Y70, G140, D165, D191, and I212 each coordinate S-adenosyl-L-methionine.

It belongs to the methyltransferase superfamily. METL family. In terms of assembly, monomer.

The protein localises to the cytoplasm. The enzyme catalyses cytidine(32) in tRNA(Thr) + S-adenosyl-L-methionine = N(3)-methylcytidine(32) in tRNA(Thr) + S-adenosyl-L-homocysteine + H(+). The catalysed reaction is cytidine(32) in tRNA(Arg)(CCU) + S-adenosyl-L-methionine = N(3)-methylcytidine(32) in tRNA(Arg)(CCU) + S-adenosyl-L-homocysteine + H(+). In terms of biological role, S-adenosyl-L-methionine-dependent methyltransferase that mediates N(3)-methylcytidine modification of residue 32 of the tRNA anticodon loop of tRNA(Thr)(UGU) and tRNA(Arg)(CCU). N(3)-methylcytidine methylation by mettl2 requires the N6-threonylcarbamoylation of tRNA (t6A37) by the EKC/KEOPS complex as prerequisite. The chain is tRNA N(3)-cytidine methyltransferase METTL2 (mettl2) from Xenopus tropicalis (Western clawed frog).